The primary structure comprises 637 residues: DNA primase (637 aa).

Residues 39 to 63 form a CHC2-type zinc finger; it reads CPFHGEKTPSFNVNAEKGFYHCFGC. A Toprim domain is found at 257–338; the sequence is HEVYLMEGFM…QIVKVPEGLD (82 aa). Positions 263, 307, and 309 each coordinate Mg(2+).

It belongs to the DnaG primase family. In terms of assembly, monomer. Interacts with DnaB. It depends on Zn(2+) as a cofactor. Requires Mg(2+) as cofactor.

It carries out the reaction ssDNA + n NTP = ssDNA/pppN(pN)n-1 hybrid + (n-1) diphosphate.. Functionally, RNA polymerase that catalyzes the synthesis of short RNA molecules used as primers for DNA polymerase during DNA replication. The sequence is that of DNA primase from Lactococcus lactis subsp. lactis (strain IL1403) (Streptococcus lactis).